The following is a 639-amino-acid chain: MGLNRFMRAMMVVFITANCITINPDIIFAATDSEDSSLNTDEWEEEKTEEQPSEVNTGPRYETAREVSSRDIKELEKSNKVRNTNKADLIAMLKEKAEKGPNINNNNSEQTENAAINEEASGADRPAIQVERRHPGLPSDSAAEIKKRRKAIASSDSELESLTYPDKPTKVNKKKVAKESVADASESDLDSSMQSADESSPQPLKANQQPFFPKVFKKIKDAGKWVRDKIDENPEVKKAIVDKSAGLIDQLLTKKKSEEVNASDFPPPPTDEELRLALPETPMLLGFNAPATSEPSSFEFPPPPTDEELRLALPETPMLLGFNAPATSEPSSFEFPPPPTEDELEIIRETASSLDSSFTRGDLASLRNAINRHSQNFSDFPPIPTEEELNGRGGRPTSEEFSSLNSGDFTDDENSETTEEEIDRLADLRDRGTGKHSRNAGFLPLNPFASSPVPSLSPKVSKISAPALISDITKKTPFKNPSQPLNVFNKKTTTKTVTKKPTPVKTAPKLAELPATKPQETVLRENKTPFIEKQAETNKQSINMPSLPVIQKEATESDKEEMKPQTEEKMVEESESANNANGKNRSAGIEEGKLIAKSAEDEKAKEEPGNHTTLILAMLAIGVFSLGAFIKIIQLRKNN.

The N-terminal stretch at 1–29 is a signal peptide; that stretch reads MGLNRFMRAMMVVFITANCITINPDIIFA. 4 disordered regions span residues 36–71, 132–212, 285–308, and 320–341; these read SSLN…SSRD, RRHP…QPFF, LGFN…TDEE, and LGFN…PPTE. Residues 41–52 show a composition bias toward acidic residues; the sequence is DEWEEEKTEEQP. Over residues 62 to 71 the composition is skewed to basic and acidic residues; the sequence is ETAREVSSRD. Residues 190–210 show a composition bias toward polar residues; it reads DSSMQSADESSPQPLKANQQP. 2 repeat units span residues 264 to 298 and 299 to 333. The tract at residues 264-333 is 5 X approximate tandem repeats, Pro-rich; it reads DFPPPPTDEE…APATSEPSSF (70 aa). One copy of the 3; approximate repeat lies at 334-378; it reads EFPPPPTEDELEIIRETASSLDSSFTRGDLASLRNAINRHSQNFS. The short motif at 360–362 is the Cell attachment site element; sequence RGD. 2 disordered regions span residues 372-459 and 474-610; these read RHSQ…LSPK and KKTP…EPGN. Residues 379–417 form a 4; approximate repeat; it reads DFPPIPTEEELNGRGGRPTSEEFSSLNSGDFTDDENSET. Residues 409 to 422 are compositionally biased toward acidic residues; that stretch reads FTDDENSETTEEEI. One copy of the 5; truncated repeat lies at 418-422; sequence TEEEI. Residues 423–433 show a composition bias toward basic and acidic residues; it reads DRLADLRDRGT. Composition is skewed to low complexity over residues 450–459 and 490–509; these read SSPVPSLSPK and KKTT…TAPK. Basic and acidic residues-rich tracts occupy residues 553–572 and 588–609; these read EATE…KMVE and GIEE…EEPG. A helical transmembrane segment spans residues 613–633; the sequence is TLILAMLAIGVFSLGAFIKII.

It is found in the cell membrane. Its function is as follows. Virulence factor required for host cell microfilament interaction. It induces actin assembly around the bacteria to allow it to move within the cytoplasm. It is involved in the actin polymerization process. It seems to act as a nucleator that induces the reorganization of the actin cytoskeleton. This Listeria monocytogenes serovar 1/2a (strain ATCC BAA-679 / EGD-e) protein is Actin assembly-inducing protein (actA).